The sequence spans 109 residues: Probable cytochrome b-c1 complex subunit 7 (109 aa).

It belongs to the UQCRB/QCR7 family. Component of the ubiquinol-cytochrome c oxidoreductase (cytochrome b-c1 complex, complex III, CIII), a multisubunit enzyme composed of 3 respiratory subunits cytochrome b, cytochrome c1 and Rieske protein, 2 core protein subunits, and additional low-molecular weight protein subunits. The complex exists as an obligatory dimer and forms supercomplexes (SCs) in the inner mitochondrial membrane with cytochrome c oxidase (complex IV, CIV).

Its subcellular location is the mitochondrion inner membrane. Its function is as follows. Component of the ubiquinol-cytochrome c oxidoreductase, a multisubunit transmembrane complex that is part of the mitochondrial electron transport chain which drives oxidative phosphorylation. The respiratory chain contains 3 multisubunit complexes succinate dehydrogenase (complex II, CII), ubiquinol-cytochrome c oxidoreductase (cytochrome b-c1 complex, complex III, CIII) and cytochrome c oxidase (complex IV, CIV), that cooperate to transfer electrons derived from NADH and succinate to molecular oxygen, creating an electrochemical gradient over the inner membrane that drives transmembrane transport and the ATP synthase. The cytochrome b-c1 complex catalyzes electron transfer from ubiquinol to cytochrome c, linking this redox reaction to translocation of protons across the mitochondrial inner membrane, with protons being carried across the membrane as hydrogens on the quinol. In the process called Q cycle, 2 protons are consumed from the matrix, 4 protons are released into the intermembrane space and 2 electrons are passed to cytochrome c. The protein is Probable cytochrome b-c1 complex subunit 7 of Dictyostelium discoideum (Social amoeba).